A 108-amino-acid chain; its full sequence is MWTIPTYILAAFAEIGGCFAFWAWLRLDKSPLWLVPGMASLGLFAWALTRIDADFAGRAYAAYGGIYILASLIWMWAVEGTRPDRWDTIGAAICVVGAMVIIFGPRST.

The next 4 membrane-spanning stretches (helical) occupy residues 4–24, 31–51, 59–79, and 85–105; these read IPTYILAAFAEIGGCFAFWAW, PLWLVPGMASLGLFAWALTRI, AYAAYGGIYILASLIWMWAVE, and RWDTIGAAICVVGAMVIIFGP.

Belongs to the UPF0060 family.

The protein resides in the cell inner membrane. This chain is UPF0060 membrane protein amb3269, found in Paramagnetospirillum magneticum (strain ATCC 700264 / AMB-1) (Magnetospirillum magneticum).